A 669-amino-acid polypeptide reads, in one-letter code: Probable serine/threonine-protein kinase DDB_G0291918 (669 aa).

A Protein kinase domain is found at 13–360 (YNNIKELGRG…LKETLNHPFL (348 aa)). Residues 19 to 27 (LGRGVSGVV) and Lys-42 contribute to the ATP site. Residue Asp-141 is the Proton acceptor of the active site. The segment covering 396 to 405 (QNQQQQQQQQ) has biased composition (low complexity). Disordered regions lie at residues 396 to 518 (QNQQ…APTF) and 530 to 550 (FPKLLPPPTKDAPPLETMNWR). Positions 406–418 (KSFSTSSLPQVNH) are enriched in polar residues. Composition is skewed to low complexity over residues 419 to 449 (NNDTNNNNNNNNNNNNNNNNNNNNNNNNNNN) and 457 to 494 (QSNNSSSSSSSSSPPSPTISKSSPSSLSSSLSPSSSTD).

Belongs to the protein kinase superfamily. Ser/Thr protein kinase family.

It catalyses the reaction L-seryl-[protein] + ATP = O-phospho-L-seryl-[protein] + ADP + H(+). It carries out the reaction L-threonyl-[protein] + ATP = O-phospho-L-threonyl-[protein] + ADP + H(+). In Dictyostelium discoideum (Social amoeba), this protein is Probable serine/threonine-protein kinase DDB_G0291918.